We begin with the raw amino-acid sequence, 347 residues long: Isopentenyl-diphosphate delta-isomerase (347 aa).

11 to 12 (RK) contacts substrate. FMN-binding positions include 72-74 (AMT), S102, and N131. Q161 contacts substrate. E162 is a Mg(2+) binding site. Residues K192, T222, and 287–288 (AG) contribute to the FMN site.

This sequence belongs to the IPP isomerase type 2 family. As to quaternary structure, homooctamer. Dimer of tetramers. FMN serves as cofactor. It depends on NADPH as a cofactor. Requires Mg(2+) as cofactor.

The protein localises to the cytoplasm. The catalysed reaction is isopentenyl diphosphate = dimethylallyl diphosphate. Its function is as follows. Involved in the biosynthesis of isoprenoids. Catalyzes the 1,3-allylic rearrangement of the homoallylic substrate isopentenyl (IPP) to its allylic isomer, dimethylallyl diphosphate (DMAPP). In Lactococcus lactis subsp. lactis (strain IL1403) (Streptococcus lactis), this protein is Isopentenyl-diphosphate delta-isomerase.